A 134-amino-acid polypeptide reads, in one-letter code: Arsenate reductase (134 aa).

Active-site nucleophile residues include C11, C83, and C90. 2 cysteine pairs are disulfide-bonded: C11/C83 and C83/C90.

This sequence belongs to the low molecular weight phosphotyrosine protein phosphatase family. Thioredoxin-coupled ArsC subfamily.

The protein resides in the cytoplasm. It carries out the reaction arsenate + [thioredoxin]-dithiol + H(+) = arsenite + [thioredoxin]-disulfide + H2O. Catalyzes the reduction of arsenate [As(V)] to arsenite [As(III)]. The chain is Arsenate reductase from Bacillus cereus (strain AH187).